Consider the following 490-residue polypeptide: Glutamyl-tRNA(Gln) amidotransferase subunit A (490 aa).

Catalysis depends on charge relay system residues Lys78 and Ser153. Ser177 functions as the Acyl-ester intermediate in the catalytic mechanism.

Belongs to the amidase family. GatA subfamily. In terms of assembly, heterotrimer of A, B and C subunits.

The enzyme catalyses L-glutamyl-tRNA(Gln) + L-glutamine + ATP + H2O = L-glutaminyl-tRNA(Gln) + L-glutamate + ADP + phosphate + H(+). Its function is as follows. Allows the formation of correctly charged Gln-tRNA(Gln) through the transamidation of misacylated Glu-tRNA(Gln) in organisms which lack glutaminyl-tRNA synthetase. The reaction takes place in the presence of glutamine and ATP through an activated gamma-phospho-Glu-tRNA(Gln). The chain is Glutamyl-tRNA(Gln) amidotransferase subunit A from Bdellovibrio bacteriovorus (strain ATCC 15356 / DSM 50701 / NCIMB 9529 / HD100).